Reading from the N-terminus, the 254-residue chain is Low affinity immunoglobulin gamma Fc region receptor III-A (254 aa).

An N-terminal signal peptide occupies residues 1–16 (MWQLLLPTALLLLVSA). At 17–208 (GMRTEDLPKA…ISSFFPPGYQ (192 aa)) the chain is on the extracellular side. 2 consecutive Ig-like C2-type domains span residues 24 to 105 (PKAV…LEVH) and 107 to 189 (GWLL…VNIT). Residues C47 and C89 are joined by a disulfide bond. N-linked (GlcNAc...) asparagine glycans are attached at residues N56, N63, and N92. C128 and C172 form a disulfide bridge. N180 and N187 each carry an N-linked (GlcNAc...) asparagine glycan. Residues 209 to 229 (VSFCLVMVLLFAVDTGLYFSV) traverse the membrane as a helical segment. Residues 230–254 (KTNIRSSTRDWKDHKFKWRKDPQDK) lie on the Cytoplasmic side of the membrane. S236 carries the post-translational modification Phosphoserine; by PKC. The residue at position 237 (T237) is a Phosphothreonine; by PKC.

As to quaternary structure, forms a heterooligomeric complex with ITAM-containing signaling subunits, either a homodimer of CD247, a homodimer of FCER1G or a heterodimer of CD247 and FCER1G. Interacts (via transmembrane domain) with signaling subunits; this interaction is a prerequisite for receptor complex expression on the cell surface and intracellular signal transduction. Binds the Fc region of antigen-complexed IgG with a preference for IgG1 and IgG3 isotypes. Interacts with CD2; this interaction is involved in NK cell activation and cytotoxicity. Interacts with S100A4; this interaction inhibits PKC-dependent phosphorylation of FCGR3A. In terms of processing, glycosylated. Contains high mannose- and complex-type oligosaccharides. Glycosylation at Asn-180 is mandatory for high affinity binding to the Fc and for discrimination between fucosylated and afucosylated IgG glycoforms. Post-translationally, undergoes rapid ectodomain shedding upon NK cell stimulation. The soluble form is produced by a proteolytic cleavage mediated by ADAM17. Repeated stimulation causes receptor shedding, a mechanism that allows for increased NK cell motility and detachment from opsonized target cells while avoiding activation-induced NK cell apoptosis. Phosphorylated at RSSTR motif by PKC. The relevant physiological PKCs might be PRKCI, PRKCG, PRKCE, PRKCH and PRKCQ. In terms of tissue distribution, expressed in natural killer cells (at protein level). Expressed in a subset of circulating monocytes (at protein level).

The protein localises to the cell membrane. Its subcellular location is the secreted. Functionally, receptor for the invariable Fc fragment of immunoglobulin gamma (IgG). Optimally activated upon binding of clustered antigen-IgG complexes displayed on cell surfaces, triggers lysis of antibody-coated cells, a process known as antibody-dependent cellular cytotoxicity (ADCC). Does not bind free monomeric IgG, thus avoiding inappropriate effector cell activation in the absence of antigenic trigger. Mediates IgG effector functions on natural killer (NK) cells. Binds antigen-IgG complexes generated upon infection and triggers NK cell-dependent cytokine production and degranulation to limit viral load and propagation. Involved in the generation of memory-like adaptive NK cells capable to produce high amounts of IFNG and to efficiently eliminate virus-infected cells via ADCC. Regulates NK cell survival and proliferation, in particular by preventing NK cell progenitor apoptosis. Fc-binding subunit that associates with CD247 and/or FCER1G adapters to form functional signaling complexes. Following the engagement of antigen-IgG complexes, triggers phosphorylation of immunoreceptor tyrosine-based activation motif (ITAM)-containing adapters with subsequent activation of phosphatidylinositol 3-kinase signaling and sustained elevation of intracellular calcium that ultimately drive NK cell activation. The ITAM-dependent signaling coupled to receptor phosphorylation by PKC mediates robust intracellular calcium flux that leads to production of pro-inflammatory cytokines, whereas in the absence of receptor phosphorylation it mainly activates phosphatidylinositol 3-kinase signaling leading to cell degranulation. Costimulates NK cells and trigger lysis of target cells independently of IgG binding. Mediates the antitumor activities of therapeutic antibodies. Upon ligation on monocytes triggers TNFA-dependent ADCC of IgG-coated tumor cells. Mediates enhanced ADCC in response to afucosylated IgGs. In terms of biological role, (Microbial infection) Involved in Dengue virus pathogenesis via antibody-dependent enhancement (ADE) mechanism. Secondary infection with Dengue virus triggers elevated levels of afucosylated non-neutralizing IgG1s with reactivity to viral envelope/E protein. Viral antigen-IgG1 complexes bind with high affinity to FCGR3A, facilitating virus entry in myeloid cells and subsequent viral replication. The chain is Low affinity immunoglobulin gamma Fc region receptor III-A from Homo sapiens (Human).